We begin with the raw amino-acid sequence, 526 residues long: DNA polymerase epsilon subunit B (526 aa).

It belongs to the DNA polymerase epsilon subunit B family. In terms of assembly, subunit of the DNA polymerase II. Interacts with POL2A (via C-terminus).

Its subcellular location is the nucleus. Its function is as follows. As accessory component of DNA polymerase II participates in chromosomal DNA replication. Required for the timing and determination of cell fate during plant embryogenesis and root pole development, by promoting cell cycle and cell type patterning. Necessary for proper shoot (SAM) and root apical meristem (RAM) functions. Is essential to promote the first divisions of the zygote. The sequence is that of DNA polymerase epsilon subunit B from Arabidopsis thaliana (Mouse-ear cress).